The chain runs to 103 residues: Integration host factor subunit beta (103 aa).

Residues 62–81 (RNPKTGESVALPGKHVPHFK) are disordered.

Belongs to the bacterial histone-like protein family. In terms of assembly, heterodimer of an alpha and a beta chain.

In terms of biological role, this protein is one of the two subunits of integration host factor, a specific DNA-binding protein that functions in genetic recombination as well as in transcriptional and translational control. This is Integration host factor subunit beta from Xanthomonas axonopodis pv. citri (strain 306).